Here is a 435-residue protein sequence, read N- to C-terminus: Enolase (435 aa).

Residue Gln167 participates in (2R)-2-phosphoglycerate binding. The Proton donor role is filled by Glu209. The Mg(2+) site is built by Asp246, Glu292, and Asp319. Positions 344, 373, 374, and 395 each coordinate (2R)-2-phosphoglycerate. Lys344 acts as the Proton acceptor in catalysis.

The protein belongs to the enolase family. Mg(2+) is required as a cofactor.

It is found in the cytoplasm. The protein resides in the secreted. It localises to the cell surface. It catalyses the reaction (2R)-2-phosphoglycerate = phosphoenolpyruvate + H2O. Its pathway is carbohydrate degradation; glycolysis; pyruvate from D-glyceraldehyde 3-phosphate: step 4/5. Functionally, catalyzes the reversible conversion of 2-phosphoglycerate (2-PG) into phosphoenolpyruvate (PEP). It is essential for the degradation of carbohydrates via glycolysis. This chain is Enolase, found in Lachnospira eligens (strain ATCC 27750 / DSM 3376 / VPI C15-48 / C15-B4) (Eubacterium eligens).